Consider the following 292-residue polypeptide: 32 kDa protein (292 aa).

May be involved in transmission by vector nematode species. The polypeptide is 32 kDa protein (Bidens pilosa (Hairy beggarticks)).